Here is a 63-residue protein sequence, read N- to C-terminus: Large ribosomal subunit protein bL35 (63 aa).

Belongs to the bacterial ribosomal protein bL35 family.

This chain is Large ribosomal subunit protein bL35, found in Finegoldia magna (strain ATCC 29328 / DSM 20472 / WAL 2508) (Peptostreptococcus magnus).